A 284-amino-acid chain; its full sequence is Bifunctional protein FolD (284 aa).

Residues 164–166, S189, and I230 each bind NADP(+); that span reads GRG.

Belongs to the tetrahydrofolate dehydrogenase/cyclohydrolase family. Homodimer.

The enzyme catalyses (6R)-5,10-methylene-5,6,7,8-tetrahydrofolate + NADP(+) = (6R)-5,10-methenyltetrahydrofolate + NADPH. The catalysed reaction is (6R)-5,10-methenyltetrahydrofolate + H2O = (6R)-10-formyltetrahydrofolate + H(+). Its pathway is one-carbon metabolism; tetrahydrofolate interconversion. In terms of biological role, catalyzes the oxidation of 5,10-methylenetetrahydrofolate to 5,10-methenyltetrahydrofolate and then the hydrolysis of 5,10-methenyltetrahydrofolate to 10-formyltetrahydrofolate. This chain is Bifunctional protein FolD, found in Desulforamulus reducens (strain ATCC BAA-1160 / DSM 100696 / MI-1) (Desulfotomaculum reducens).